The sequence spans 359 residues: Protein mab-21-like 2-A (359 aa).

This sequence belongs to the mab-21 family.

The protein localises to the nucleus. The protein resides in the cytoplasm. Functionally, required for normal development of the eye. May promote dorsalization of the developing embryo by antagonizing the ventralizing factor bmp4. Functional antagonism of bmp4 may require interaction with smad1. Required for gastrulation and subsequent neural development. May function as a transcriptional repressor. This Xenopus laevis (African clawed frog) protein is Protein mab-21-like 2-A (mab21l2-a).